Here is a 256-residue protein sequence, read N- to C-terminus: 3-hydroxy-5-phosphonooxypentane-2,4-dione thiolase (256 aa).

The active-site Schiff-base intermediate with substrate is the lysine 168.

This sequence belongs to the DeoC/FbaB aldolase family. As to quaternary structure, homodecamer.

The protein resides in the cytoplasm. The catalysed reaction is dihydroxyacetone phosphate + acetyl-CoA = 3-hydroxy-2,4-dioxopentyl phosphate + CoA. In terms of biological role, involved in the degradation of phospho-AI-2, thereby terminating induction of the lsr operon and closing the AI-2 signaling cycle. Catalyzes the transfer of an acetyl moiety from 3-hydroxy-5-phosphonooxypentane-2,4-dione to CoA to form glycerone phosphate and acetyl-CoA. This chain is 3-hydroxy-5-phosphonooxypentane-2,4-dione thiolase (lsrF), found in Shigella flexneri.